The primary structure comprises 288 residues: Stress response protein YhaX (288 aa).

In Bacillus subtilis (strain 168), this protein is Stress response protein YhaX (yhaX).